Consider the following 244-residue polypeptide: uncharacterized protein (244 aa).

The segment at methionine 1–glutamine 127 is disordered. Polar residues predominate over residues tryptophan 34 to threonine 43. Composition is skewed to low complexity over residues glutamine 45–proline 75 and proline 88–glutamine 127. A helical transmembrane segment spans residues valine 136 to isoleucine 156.

It is found in the membrane. This is an uncharacterized protein from Mycobacterium tuberculosis (strain CDC 1551 / Oshkosh).